We begin with the raw amino-acid sequence, 211 residues long: FMN-dependent NADH:quinone oxidoreductase 2 (211 aa).

FMN contacts are provided by residues Ser10 and 17–19; that span reads SRS.

Belongs to the azoreductase type 1 family. In terms of assembly, homodimer. It depends on FMN as a cofactor.

The enzyme catalyses 2 a quinone + NADH + H(+) = 2 a 1,4-benzosemiquinone + NAD(+). The catalysed reaction is N,N-dimethyl-1,4-phenylenediamine + anthranilate + 2 NAD(+) = 2-(4-dimethylaminophenyl)diazenylbenzoate + 2 NADH + 2 H(+). In terms of biological role, quinone reductase that provides resistance to thiol-specific stress caused by electrophilic quinones. Its function is as follows. Also exhibits azoreductase activity. Catalyzes the reductive cleavage of the azo bond in aromatic azo compounds to the corresponding amines. This chain is FMN-dependent NADH:quinone oxidoreductase 2, found in Listeria monocytogenes serotype 4b (strain F2365).